Reading from the N-terminus, the 63-residue chain is Large ribosomal subunit protein bL28 (63 aa).

The segment covering 11–20 (GNNSGASVSH) has biased composition (polar residues). The disordered stretch occupies residues 11-30 (GNNSGASVSHSNKKTKRKWK). The span at 21–30 (SNKKTKRKWK) shows a compositional bias: basic residues.

It belongs to the bacterial ribosomal protein bL28 family.

The chain is Large ribosomal subunit protein bL28 from Natranaerobius thermophilus (strain ATCC BAA-1301 / DSM 18059 / JW/NM-WN-LF).